We begin with the raw amino-acid sequence, 291 residues long: 5'-3' exonuclease (291 aa).

One can recognise a 5'-3' exonuclease domain in the interval 176-269; it reads TPKQVIEYKG…VHAALKPIDK (94 aa).

Its function is as follows. 5'-3' exonuclease acting preferentially on double-stranded DNA. This is 5'-3' exonuclease (polA) from Mycoplasma pneumoniae (strain ATCC 29342 / M129 / Subtype 1) (Mycoplasmoides pneumoniae).